A 519-amino-acid polypeptide reads, in one-letter code: Sorting nexin-2 (519 aa).

A disordered region spans residues 1-104 (MAAEREPPPL…EPSPAVTPVT (104 aa)). 2 stretches are compositionally biased toward low complexity: residues 27–50 (LFTS…LPAE) and 93–104 (SSEPSPAVTPVT). The residue at position 97 (S97) is a Phosphoserine. Phosphothreonine occurs at positions 101 and 104. 2 positions are modified to phosphoserine: S117 and S119. One can recognise a PX domain in the interval 140-269 (FDIEIGVSDP…QFLESSELPR (130 aa)). The a 1,2-diacyl-sn-glycero-3-phospho-(1D-myo-inositol-3-phosphate) site is built by R183, S185, K211, and R235. A Phosphoserine modification is found at S185. Positions 260 to 519 (QFLESSELPR…AFLPEAKAIA (260 aa)) are interaction with RhoG. The residue at position 277 (S277) is a Phosphoserine. The tract at residues 278–295 (GAGILRMVNKAADAVNKM) is membrane-binding amphipathic helix. A BAR domain is found at 299-519 (MNESDAWFEE…AFLPEAKAIA (221 aa)). K469 bears the N6-acetyllysine mark.

It belongs to the sorting nexin family. As to quaternary structure, predominantly forms heterodimers with BAR domain-containing sorting nexins SNX5, SNX6 and SNX32; can self-associate to form homodimers. The heterodimers are proposed to self-assemble into helical arrays on the membrane to stabilize and expand local membrane curvature underlying endosomal tubule formation. Thought to be a component of the originally described retromer complex (also called SNX-BAR retromer) which is a pentamer containing the heterotrimeric retromer cargo-selective complex (CSC), also described as vacuolar protein sorting subcomplex (VPS), and a heterodimeric membrane-deforming subcomplex formed between SNX1 or SNX2 and SNX5 or SNX6 (also called SNX-BAR subcomplex); the respective CSC and SNX-BAR subcomplexes associate with low affinity. Interacts with SNX5, SNX6, SNX32, VPS26A, VPS29, VPS35, FNBP1, KALRN, RHOG (GDP-bound form).

The protein localises to the early endosome membrane. It localises to the cell projection. Its subcellular location is the lamellipodium. In terms of biological role, involved in several stages of intracellular trafficking. Interacts with membranes containing phosphatidylinositol 3-phosphate (PtdIns(3P)) or phosphatidylinositol 3,5-bisphosphate (PtdIns(3,5)P2). Acts in part as component of the retromer membrane-deforming SNX-BAR subcomplex. The SNX-BAR retromer mediates retrograde transport of cargo proteins from endosomes to the trans-Golgi network (TGN) and is involved in endosome-to-plasma membrane transport for cargo protein recycling. The SNX-BAR subcomplex functions to deform the donor membrane into a tubular profile called endosome-to-TGN transport carrier (ETC). Can sense membrane curvature and has in vitro vesicle-to-membrane remodeling activity. Required for retrograde endosome-to-TGN transport of TGN38. Promotes KALRN- and RHOG-dependent but retromer-independent membrane remodeling such as lamellipodium formation; the function is dependent on GEF activity of KALRN. This chain is Sorting nexin-2 (SNX2), found in Homo sapiens (Human).